Here is a 120-residue protein sequence, read N- to C-terminus: ATP-dependent Clp protease adapter protein ClpS (120 aa).

The protein belongs to the ClpS family. Binds to the N-terminal domain of the chaperone ClpA.

Functionally, involved in the modulation of the specificity of the ClpAP-mediated ATP-dependent protein degradation. In Pseudomonas fluorescens (strain ATCC BAA-477 / NRRL B-23932 / Pf-5), this protein is ATP-dependent Clp protease adapter protein ClpS.